The chain runs to 234 residues: Endonuclease NucS (234 aa).

It belongs to the NucS endonuclease family.

It is found in the cytoplasm. In terms of biological role, cleaves both 3' and 5' ssDNA extremities of branched DNA structures. This Bifidobacterium adolescentis (strain ATCC 15703 / DSM 20083 / NCTC 11814 / E194a) protein is Endonuclease NucS.